The sequence spans 262 residues: Indole-3-glycerol phosphate synthase (262 aa).

The protein belongs to the TrpC family.

The catalysed reaction is 1-(2-carboxyphenylamino)-1-deoxy-D-ribulose 5-phosphate + H(+) = (1S,2R)-1-C-(indol-3-yl)glycerol 3-phosphate + CO2 + H2O. It participates in amino-acid biosynthesis; L-tryptophan biosynthesis; L-tryptophan from chorismate: step 4/5. The polypeptide is Indole-3-glycerol phosphate synthase (Bordetella pertussis (strain Tohama I / ATCC BAA-589 / NCTC 13251)).